Reading from the N-terminus, the 513-residue chain is Fructose import ATP-binding protein FruK (513 aa).

2 consecutive ABC transporter domains span residues 8-244 (VVMK…IGKS) and 262-505 (PGEK…IANT). An ATP-binding site is contributed by 40 to 47 (GENGAGKS).

This sequence belongs to the ABC transporter superfamily. As to quaternary structure, the complex is composed of an ATP-binding protein (FruK), two transmembrane proteins (FruF and FruG) and a solute-binding protein (FruE).

Its subcellular location is the cell membrane. It catalyses the reaction D-fructose(out) + ATP + H2O = D-fructose(in) + ADP + phosphate + H(+). In terms of biological role, part of the high-affinity ABC transporter complex FruEKFG involved in fructose uptake. Can also transport ribose and xylose, with lower affinity. Probably responsible for energy coupling to the transport system. This Bifidobacterium longum (strain NCC 2705) protein is Fructose import ATP-binding protein FruK.